The primary structure comprises 534 residues: CTP synthase (534 aa).

The interval 1–269 (MHVSNSKFIF…DKIIIDAFRL (269 aa)) is amidoligase domain. Residue S17 coordinates CTP. S17 provides a ligand contact to UTP. Position 18–23 (18–23 (SLGKGV)) interacts with ATP. Y58 is an L-glutamine binding site. An ATP-binding site is contributed by D75. Residues D75 and E143 each coordinate Mg(2+). CTP is bound by residues 150-152 (DIE), 190-195 (KTKPTQ), and K226. UTP is bound by residues 190-195 (KTKPTQ) and K226. The region spanning 294–532 (DIAIVGKYIK…IENAYIYKKE (239 aa)) is the Glutamine amidotransferase type-1 domain. Position 352 (G352) interacts with L-glutamine. C379 serves as the catalytic Nucleophile; for glutamine hydrolysis. L-glutamine-binding positions include 380–383 (LGMQ), E403, and R460. Residues H505 and E507 contribute to the active site.

This sequence belongs to the CTP synthase family. In terms of assembly, homotetramer.

The catalysed reaction is UTP + L-glutamine + ATP + H2O = CTP + L-glutamate + ADP + phosphate + 2 H(+). The enzyme catalyses L-glutamine + H2O = L-glutamate + NH4(+). It catalyses the reaction UTP + NH4(+) + ATP = CTP + ADP + phosphate + 2 H(+). It participates in pyrimidine metabolism; CTP biosynthesis via de novo pathway; CTP from UDP: step 2/2. With respect to regulation, allosterically activated by GTP, when glutamine is the substrate; GTP has no effect on the reaction when ammonia is the substrate. The allosteric effector GTP functions by stabilizing the protein conformation that binds the tetrahedral intermediate(s) formed during glutamine hydrolysis. Inhibited by the product CTP, via allosteric rather than competitive inhibition. Its function is as follows. Catalyzes the ATP-dependent amination of UTP to CTP with either L-glutamine or ammonia as the source of nitrogen. Regulates intracellular CTP levels through interactions with the four ribonucleotide triphosphates. This chain is CTP synthase, found in Hydrogenobaculum sp. (strain Y04AAS1).